Reading from the N-terminus, the 1494-residue chain is B-cell CLL/lymphoma 9-like protein (1494 aa).

2 disordered regions span residues 1–236 and 269–496; these read MRIL…PPSQ and VPRA…DMGQ. A compositionally biased stretch (pro residues) spans 20-37; sequence GSPPLSPRGHCPPAPAKP. Serine 21 and serine 25 each carry phosphoserine. Lysine 36 bears the N6-acetyllysine mark. 2 stretches are compositionally biased toward polar residues: residues 45-70 and 85-96; these read TNHG…TCNL and NQISPSNSSLKN. Serine 88 is subject to Phosphoserine. 2 positions are modified to N6-acetyllysine: lysine 108 and lysine 110. Basic and acidic residues-rich tracts occupy residues 114–126 and 134–153; these read ERSV…EQRE and SEAK…ERKQ. Residues serine 116 and serine 118 each carry the phosphoserine modification. Residue lysine 137 is modified to N6-acetyllysine. Polar residues predominate over residues 193-207; the sequence is PGQTAQLPLSESSAP. Pro residues-rich tracts occupy residues 279–289 and 299–322; these read KVPPTPEPLPL and SQPP…PPEG. A necessary for interaction with CTNNB1 region spans residues 302 to 530; the sequence is PPLPPPPPAP…QEEYYEEKRR (229 aa). The span at 348–360 shows a compositional bias: low complexity; the sequence is THPNTPTAATANN. Over residues 396 to 418 the composition is skewed to basic and acidic residues; the sequence is LSKEQLEHRERSLQTLRDIERLL. The residue at position 421 (serine 421) is a Phosphoserine. Threonine 511 carries the post-translational modification Phosphothreonine. Asymmetric dimethylarginine is present on arginine 677. 14 positions are modified to phosphoserine: serine 747, serine 810, serine 912, serine 923, serine 935, serine 939, serine 944, serine 972, serine 984, serine 988, serine 994, serine 1001, serine 1007, and serine 1014. Disordered regions lie at residues 905–1082 and 1113–1206; these read RGLG…NPLS and ELLP…PGGP. Over residues 932–957 the composition is skewed to polar residues; the sequence is PTLSQVHSPLVTSPSANLKSPQTPSQ. A compositionally biased stretch (polar residues) spans 974 to 993; sequence QVLSSSLGVRSPTGSPSRLK. Positions 1016-1035 are enriched in polar residues; that stretch reads GVSQNKQPPLSINSSSTLGN. Residues 1046–1059 are compositionally biased toward low complexity; the sequence is PRNSSSAPPANPSS. The span at 1060–1082 shows a compositional bias: polar residues; that stretch reads GLMNPSLPFTSSPDPTPSQNPLS. Residues 1119–1129 are compositionally biased toward pro residues; sequence PLLPPPPPPQG. Residues 1133 to 1143 show a composition bias toward polar residues; it reads GISNNQPNQMH. Residues 1165–1176 are compositionally biased toward pro residues; that stretch reads HEPPPTMLPSPT. Lysine 1339 participates in a covalent cross-link: Glycyl lysine isopeptide (Lys-Gly) (interchain with G-Cter in SUMO2).

The protein belongs to the BCL9 family. In terms of assembly, found in a complex with CDC73; CTNNB1 and PYGO1. Interacts with CTNNB1. Expressed in kidney, liver, lung, testis, brain, spleen, heart and skeletal muscle. Highly expressed in numerous colorectal tumors compared to corresponding non-cancerous tissues.

The protein localises to the nucleus. Its function is as follows. Transcriptional regulator that acts as an activator. Promotes beta-catenin transcriptional activity. Plays a role in tumorigenesis. Enhances the neoplastic transforming activity of CTNNB1. The chain is B-cell CLL/lymphoma 9-like protein (Bcl9l) from Mus musculus (Mouse).